Here is a 91-residue protein sequence, read N- to C-terminus: YcgL domain-containing protein Sde_1339 (91 aa).

The region spanning 1–85 (MIVDIYRSAK…PPESYMNEIP (85 aa)) is the YcgL domain. Residues 72 to 91 (QMPPPPESYMNEIPNDKMPR) are disordered.

The protein is YcgL domain-containing protein Sde_1339 of Saccharophagus degradans (strain 2-40 / ATCC 43961 / DSM 17024).